The following is a 174-amino-acid chain: Inactive signal peptidase IA (174 aa).

Residues 1 to 7 (MKKVVKY) are Cytoplasmic-facing. The helical transmembrane segment at 8–28 (LISLILAIIIVLFVQTFVIVG) threads the bilayer. The Extracellular segment spans residues 29–174 (HVIPNNDMSP…FSKWTIQFKS (146 aa)).

It belongs to the peptidase S26 family.

It is found in the cell membrane. Its function is as follows. Catalytically inactive. The sequence is that of Inactive signal peptidase IA (spsA) from Staphylococcus aureus (strain Mu50 / ATCC 700699).